Reading from the N-terminus, the 540-residue chain is Maintenance of mitochondrial morphology protein 1 (540 aa).

Over 1-25 (MAGPSNQTQPPPPVLTQPSLSFTQG) the chain is Lumenal. Residues 26–46 (LLVGQLSVVLLIGAFIKFFIF) form a helical membrane-spanning segment. The Cytoplasmic portion of the chain corresponds to 47 to 540 (GEAPPHPSRN…GSMPDPVVVT (494 aa)). Disordered regions lie at residues 52 to 135 (HPSR…SHQP), 275 to 331 (GPGT…ATAA), 416 to 471 (GRTG…GGSM), and 509 to 540 (YGGA…VVVT). Composition is skewed to polar residues over residues 69–81 (YSLN…SSPR), 88–105 (STSN…NTRS), and 112–121 (YSATPTNPTS). Residues 122 to 132 (KHSRSRPHHSS) are compositionally biased toward basic residues. The region spanning 134–409 (QPESLDWFNV…EPRVQVVGLP (276 aa)) is the SMP-LTD domain. Over residues 321 to 331 (TNTNTAGATAA) the composition is skewed to low complexity. Composition is skewed to gly residues over residues 442–471 (TAGG…GGSM) and 511–521 (GAQGGGGGGGR).

This sequence belongs to the MMM1 family. Homodimer. Component of the ER-mitochondria encounter structure (ERMES) or MDM complex, composed of MMM1, MDM10, MDM12 and MDM34. An MMM1 homodimer associates with one molecule of MDM12 on each side in a pairwise head-to-tail manner, and the SMP-LTD domains of MMM1 and MDM12 generate a continuous hydrophobic tunnel for phospholipid trafficking.

It is found in the endoplasmic reticulum membrane. In terms of biological role, component of the ERMES/MDM complex, which serves as a molecular tether to connect the endoplasmic reticulum (ER) and mitochondria. Components of this complex are involved in the control of mitochondrial shape and protein biogenesis, and function in nonvesicular lipid trafficking between the ER and mitochondria. The MDM12-MMM1 subcomplex functions in the major beta-barrel assembly pathway that is responsible for biogenesis of all outer membrane beta-barrel proteins, and acts in a late step after the SAM complex. The MDM10-MDM12-MMM1 subcomplex further acts in the TOM40-specific pathway after the action of the MDM12-MMM1 complex. Essential for establishing and maintaining the structure of mitochondria and maintenance of mtDNA nucleoids. In Blastomyces gilchristii (strain SLH14081) (Blastomyces dermatitidis), this protein is Maintenance of mitochondrial morphology protein 1.